Here is a 303-residue protein sequence, read N- to C-terminus: Probable cell division protein WhiA (303 aa).

The segment at residues 272–303 (SIQQIADSLETPLSKSGVNHRLRKINKIADEL) is a DNA-binding region (H-T-H motif).

It belongs to the WhiA family.

Its function is as follows. Involved in cell division and chromosome segregation. This Streptococcus agalactiae serotype Ia (strain ATCC 27591 / A909 / CDC SS700) protein is Probable cell division protein WhiA.